The sequence spans 79 residues: MARVTVEDCLEKVPNRFALVLMVAKRAKQLLKGAEATVSTRSNKYIVSSLREVAMGNVGYQDSLDANEAIRQIEKDLNK.

Belongs to the RNA polymerase subunit omega family. In terms of assembly, the RNAP catalytic core consists of 2 alpha, 1 beta, 1 beta' and 1 omega subunit. When a sigma factor is associated with the core the holoenzyme is formed, which can initiate transcription.

It carries out the reaction RNA(n) + a ribonucleoside 5'-triphosphate = RNA(n+1) + diphosphate. In terms of biological role, promotes RNA polymerase assembly. Latches the N- and C-terminal regions of the beta' subunit thereby facilitating its interaction with the beta and alpha subunits. This chain is DNA-directed RNA polymerase subunit omega, found in Bdellovibrio bacteriovorus (strain ATCC 15356 / DSM 50701 / NCIMB 9529 / HD100).